Consider the following 738-residue polypeptide: 1,4-alpha-glucan branching enzyme GlgB (738 aa).

Residue Asp-399 is the Nucleophile of the active site. Catalysis depends on Glu-452, which acts as the Proton donor.

The protein belongs to the glycosyl hydrolase 13 family. GlgB subfamily. As to quaternary structure, monomer.

It catalyses the reaction Transfers a segment of a (1-&gt;4)-alpha-D-glucan chain to a primary hydroxy group in a similar glucan chain.. It participates in glycan biosynthesis; glycogen biosynthesis. In terms of biological role, catalyzes the formation of the alpha-1,6-glucosidic linkages in glycogen by scission of a 1,4-alpha-linked oligosaccharide from growing alpha-1,4-glucan chains and the subsequent attachment of the oligosaccharide to the alpha-1,6 position. The protein is 1,4-alpha-glucan branching enzyme GlgB of Chlamydia trachomatis serovar L2b (strain UCH-1/proctitis).